A 269-amino-acid polypeptide reads, in one-letter code: Kafirin PGK1 (269 aa).

The N-terminal stretch at 1 to 21 (MATKIFALLALHALLVSGTTA) is a signal peptide.

This sequence belongs to the zein family.

Major seed storage prolamin. This chain is Kafirin PGK1, found in Sorghum bicolor (Sorghum).